A 197-amino-acid polypeptide reads, in one-letter code: MRPFRLGLTGSIGMGKSTTAALFAEEGVPVWDADAAVHRLYAPGGALVGPVAALCPAALKGGAVDRGALRDWIAADPTALPRLEALVHPAVAADRAAFLAHARTDIVLLDIPLLYEKGSEAEMDAVLLVTAPPVLQRARVLGRGTMTEAQFEAILARQMPDREKRARATHILETLGLEAARAYVRALIAHIRETADA.

A DPCK domain is found at 5-197; it reads RLGLTGSIGM…IAHIRETADA (193 aa). Residue 13–18 participates in ATP binding; the sequence is GMGKST.

It belongs to the CoaE family.

Its subcellular location is the cytoplasm. It catalyses the reaction 3'-dephospho-CoA + ATP = ADP + CoA + H(+). It functions in the pathway cofactor biosynthesis; coenzyme A biosynthesis; CoA from (R)-pantothenate: step 5/5. In terms of biological role, catalyzes the phosphorylation of the 3'-hydroxyl group of dephosphocoenzyme A to form coenzyme A. The sequence is that of Dephospho-CoA kinase from Cereibacter sphaeroides (strain ATCC 17023 / DSM 158 / JCM 6121 / CCUG 31486 / LMG 2827 / NBRC 12203 / NCIMB 8253 / ATH 2.4.1.) (Rhodobacter sphaeroides).